A 145-amino-acid polypeptide reads, in one-letter code: Ribosomal RNA large subunit methyltransferase H (145 aa).

S-adenosyl-L-methionine is bound by residues glycine 94 and 113–118 (LSPLTF).

It belongs to the RNA methyltransferase RlmH family. Homodimer.

It is found in the cytoplasm. The catalysed reaction is pseudouridine(1915) in 23S rRNA + S-adenosyl-L-methionine = N(3)-methylpseudouridine(1915) in 23S rRNA + S-adenosyl-L-homocysteine + H(+). Specifically methylates the pseudouridine at position 1915 (m3Psi1915) in 23S rRNA. The polypeptide is Ribosomal RNA large subunit methyltransferase H (Sorangium cellulosum (strain So ce56) (Polyangium cellulosum (strain So ce56))).